A 650-amino-acid chain; its full sequence is Acetyl-coenzyme A synthetase (650 aa).

Residues 191 to 194 (RGGR), Thr311, and Asn335 each bind CoA. ATP is bound by residues 387-389 (GEP), 411-416 (DTWWQT), Asp501, and Arg516. A CoA-binding site is contributed by Ser524. Arg527 lines the ATP pocket. 3 residues coordinate Mg(2+): Val538, His540, and Ile543. Residue Arg585 coordinates CoA. Lys610 carries the N6-acetyllysine modification.

The protein belongs to the ATP-dependent AMP-binding enzyme family. The cofactor is Mg(2+). In terms of processing, acetylated. Deacetylation by the SIR2-homolog deacetylase activates the enzyme.

The catalysed reaction is acetate + ATP + CoA = acetyl-CoA + AMP + diphosphate. Its function is as follows. Catalyzes the conversion of acetate into acetyl-CoA (AcCoA), an essential intermediate at the junction of anabolic and catabolic pathways. AcsA undergoes a two-step reaction. In the first half reaction, AcsA combines acetate with ATP to form acetyl-adenylate (AcAMP) intermediate. In the second half reaction, it can then transfer the acetyl group from AcAMP to the sulfhydryl group of CoA, forming the product AcCoA. This is Acetyl-coenzyme A synthetase from Vibrio vulnificus (strain YJ016).